A 98-amino-acid polypeptide reads, in one-letter code: Small ribosomal subunit protein uS19 (98 aa).

The tract at residues 77 to 98 is disordered; sequence TRTYRGHAGGKAEKGGSAPKRK.

The protein belongs to the universal ribosomal protein uS19 family.

Its function is as follows. Protein S19 forms a complex with S13 that binds strongly to the 16S ribosomal RNA. The polypeptide is Small ribosomal subunit protein uS19 (Prosthecochloris aestuarii (strain DSM 271 / SK 413)).